The sequence spans 280 residues: Putative pyruvate, phosphate dikinase regulatory protein (280 aa).

Gly154 to Thr161 is an ADP binding site.

The protein belongs to the pyruvate, phosphate/water dikinase regulatory protein family. PDRP subfamily.

It catalyses the reaction N(tele)-phospho-L-histidyl/L-threonyl-[pyruvate, phosphate dikinase] + ADP = N(tele)-phospho-L-histidyl/O-phospho-L-threonyl-[pyruvate, phosphate dikinase] + AMP + H(+). It carries out the reaction N(tele)-phospho-L-histidyl/O-phospho-L-threonyl-[pyruvate, phosphate dikinase] + phosphate + H(+) = N(tele)-phospho-L-histidyl/L-threonyl-[pyruvate, phosphate dikinase] + diphosphate. Its function is as follows. Bifunctional serine/threonine kinase and phosphorylase involved in the regulation of the pyruvate, phosphate dikinase (PPDK) by catalyzing its phosphorylation/dephosphorylation. This chain is Putative pyruvate, phosphate dikinase regulatory protein, found in Nitrobacter hamburgensis (strain DSM 10229 / NCIMB 13809 / X14).